The chain runs to 336 residues: Ketol-acid reductoisomerase (NADP(+)) (336 aa).

The 182-residue stretch at 1 to 182 (MAVIYYDKDA…GVTRAGVIET (182 aa)) folds into the KARI N-terminal Rossmann domain. Residues 25 to 28 (FGSQ), R48, S51, S53, and 83 to 86 (DEHQ) contribute to the NADP(+) site. H108 is an active-site residue. G134 provides a ligand contact to NADP(+). One can recognise a KARI C-terminal knotted domain in the interval 183 to 328 (TFKEETETDL…KELRKMMPWL (146 aa)). Mg(2+) contacts are provided by D191, E195, E227, and E231. Residue S252 participates in substrate binding.

The protein belongs to the ketol-acid reductoisomerase family. The cofactor is Mg(2+).

It catalyses the reaction (2R)-2,3-dihydroxy-3-methylbutanoate + NADP(+) = (2S)-2-acetolactate + NADPH + H(+). The catalysed reaction is (2R,3R)-2,3-dihydroxy-3-methylpentanoate + NADP(+) = (S)-2-ethyl-2-hydroxy-3-oxobutanoate + NADPH + H(+). It functions in the pathway amino-acid biosynthesis; L-isoleucine biosynthesis; L-isoleucine from 2-oxobutanoate: step 2/4. The protein operates within amino-acid biosynthesis; L-valine biosynthesis; L-valine from pyruvate: step 2/4. Functionally, involved in the biosynthesis of branched-chain amino acids (BCAA). Catalyzes an alkyl-migration followed by a ketol-acid reduction of (S)-2-acetolactate (S2AL) to yield (R)-2,3-dihydroxy-isovalerate. In the isomerase reaction, S2AL is rearranged via a Mg-dependent methyl migration to produce 3-hydroxy-3-methyl-2-ketobutyrate (HMKB). In the reductase reaction, this 2-ketoacid undergoes a metal-dependent reduction by NADPH to yield (R)-2,3-dihydroxy-isovalerate. This chain is Ketol-acid reductoisomerase (NADP(+)), found in Thermotoga neapolitana (strain ATCC 49049 / DSM 4359 / NBRC 107923 / NS-E).